Consider the following 352-residue polypeptide: Protein RecA (352 aa).

66–73 provides a ligand contact to ATP; that stretch reads GPESSGKT.

It belongs to the RecA family.

The protein localises to the cytoplasm. Its function is as follows. Can catalyze the hydrolysis of ATP in the presence of single-stranded DNA, the ATP-dependent uptake of single-stranded DNA by duplex DNA, and the ATP-dependent hybridization of homologous single-stranded DNAs. It interacts with LexA causing its activation and leading to its autocatalytic cleavage. The chain is Protein RecA from Psychrobacter arcticus (strain DSM 17307 / VKM B-2377 / 273-4).